Consider the following 244-residue polypeptide: SURF1-like protein (244 aa).

2 consecutive transmembrane segments (helical) span residues 7–23 and 201–219; these read ILTT…WQLS and YAIT…YVIY.

It belongs to the SURF1 family.

Its subcellular location is the cell membrane. In Rickettsia prowazekii (strain Madrid E), this protein is SURF1-like protein.